Here is a 511-residue protein sequence, read N- to C-terminus: ADP,ATP carrier protein 4 (511 aa).

12 helical membrane-spanning segments follow: residues 34-54, 70-90, 102-122, 157-177, 192-212, 231-251, 296-316, 330-350, 361-381, 390-410, 453-473, and 476-496; these read VSKF…QNLI, IISF…TAIY, IFYL…YVIF, FSLF…LLFW, FYPL…QFLE, FHTL…IIAI, LIAT…GPWK, AAFI…FVVL, FTAA…FFAV, LIIA…IGAI, LGKS…PSAS, and SIST…LWAT.

Belongs to the ADP/ATP translocase tlc family.

It is found in the cell membrane. In terms of biological role, provides the rickettsial cell with host ATP in exchange for rickettsial ADP. This is an obligate exchange system. This energy acquiring activity is an important component of rickettsial parasitism. The polypeptide is ADP,ATP carrier protein 4 (tlcD) (Rickettsia conorii (strain ATCC VR-613 / Malish 7)).